A 426-amino-acid chain; its full sequence is Serine--tRNA ligase (426 aa).

Thr-231 to Glu-233 lines the L-serine pocket. Residue Arg-262 to Glu-264 coordinates ATP. Glu-285 contacts L-serine. Glu-349–Ser-352 is an ATP binding site. Ser-385 contacts L-serine.

The protein belongs to the class-II aminoacyl-tRNA synthetase family. Type-1 seryl-tRNA synthetase subfamily. In terms of assembly, homodimer. The tRNA molecule binds across the dimer.

The protein resides in the cytoplasm. The catalysed reaction is tRNA(Ser) + L-serine + ATP = L-seryl-tRNA(Ser) + AMP + diphosphate + H(+). It catalyses the reaction tRNA(Sec) + L-serine + ATP = L-seryl-tRNA(Sec) + AMP + diphosphate + H(+). Its pathway is aminoacyl-tRNA biosynthesis; selenocysteinyl-tRNA(Sec) biosynthesis; L-seryl-tRNA(Sec) from L-serine and tRNA(Sec): step 1/1. Functionally, catalyzes the attachment of serine to tRNA(Ser). Is also able to aminoacylate tRNA(Sec) with serine, to form the misacylated tRNA L-seryl-tRNA(Sec), which will be further converted into selenocysteinyl-tRNA(Sec). The protein is Serine--tRNA ligase of Teredinibacter turnerae (strain ATCC 39867 / T7901).